A 270-amino-acid polypeptide reads, in one-letter code: 26S proteasome regulatory subunit rpn12 (270 aa).

Residues 65–237 (CDIESFARYA…LETEDGMLID (173 aa)) enclose the PCI domain.

It belongs to the proteasome subunit S14 family.

Functionally, acts as a regulatory subunit of the 26S proteasome which is involved in the ATP-dependent degradation of ubiquitinated proteins. The protein is 26S proteasome regulatory subunit rpn12 (rpn12) of Schizosaccharomyces pombe (strain 972 / ATCC 24843) (Fission yeast).